A 530-amino-acid chain; its full sequence is Probable 1,4-beta-D-glucan cellobiohydrolase B (530 aa).

Residues 1 to 26 (MLASTFSYRMYKTALILAALLGSGQA) form the signal peptide. The interval 27 to 461 (QQVGTSQAEV…SNIKVGPIGS (435 aa)) is catalytic. The Nucleophile role is filled by Glu238. Glu243 acts as the Proton donor in catalysis. N-linked (GlcNAc...) asparagine glycosylation is present at Asn296. Residues 462–492 (TFNSGGSNPGGGTTTTAKPTTTTTTAGSPGG) form a disordered region. Positions 462 to 494 (TFNSGGSNPGGGTTTTAKPTTTTTTAGSPGGTG) are ser/Thr-rich linker. A compositionally biased stretch (low complexity) spans 475–488 (TTTAKPTTTTTTAG). In terms of domain architecture, CBM1 spans 494–530 (GVAQHYGQCGGNGWQGPTTCASPYTCQKLNDFYSQCL). 2 disulfide bridges follow: Cys502–Cys519 and Cys513–Cys529.

This sequence belongs to the glycosyl hydrolase 7 (cellulase C) family.

Its subcellular location is the secreted. The enzyme catalyses Hydrolysis of (1-&gt;4)-beta-D-glucosidic linkages in cellulose and cellotetraose, releasing cellobiose from the non-reducing ends of the chains.. In terms of biological role, the biological conversion of cellulose to glucose generally requires three types of hydrolytic enzymes: (1) Endoglucanases which cut internal beta-1,4-glucosidic bonds; (2) Exocellobiohydrolases that cut the disaccharide cellobiose from the non-reducing end of the cellulose polymer chain; (3) Beta-1,4-glucosidases which hydrolyze the cellobiose and other short cello-oligosaccharides to glucose. In Neosartorya fischeri (strain ATCC 1020 / DSM 3700 / CBS 544.65 / FGSC A1164 / JCM 1740 / NRRL 181 / WB 181) (Aspergillus fischerianus), this protein is Probable 1,4-beta-D-glucan cellobiohydrolase B (cbhB).